Consider the following 87-residue polypeptide: Small ribosomal subunit protein bS20 (87 aa).

The segment covering 1 to 19 has biased composition (basic residues); the sequence is MANHKSALKRHRQSIKRNL. The segment at 1–22 is disordered; the sequence is MANHKSALKRHRQSIKRNLRNN.

Belongs to the bacterial ribosomal protein bS20 family.

Its function is as follows. Binds directly to 16S ribosomal RNA. The polypeptide is Small ribosomal subunit protein bS20 (Maridesulfovibrio salexigens (strain ATCC 14822 / DSM 2638 / NCIMB 8403 / VKM B-1763) (Desulfovibrio salexigens)).